We begin with the raw amino-acid sequence, 667 residues long: Heat shock protein DDB_G0283913 (667 aa).

A run of 2 helical transmembrane segments spans residues 2-22 and 224-244; these read FVGT…KKIL and MFIC…LNEL. A coiled-coil region spans residues 18-82; the sequence is IKKILKRKKE…ELAKKLNCYI (65 aa). Positions 432–478 are disordered; the sequence is IDDTIQDNDKSGSEVSTPTISSSSSSPLQPIIKDEKDDNIENKSDEA. Residues 444–457 are compositionally biased toward low complexity; it reads SEVSTPTISSSSSS. Basic and acidic residues predominate over residues 463–477; that stretch reads IKDEKDDNIENKSDE. The 117-residue stretch at 551-667 folds into the sHSP domain; that stretch reads MVFSSGFKPF…VITFKFEKIG (117 aa).

The protein belongs to the small heat shock protein (HSP20) family.

Its subcellular location is the membrane. This is Heat shock protein DDB_G0283913 from Dictyostelium discoideum (Social amoeba).